The primary structure comprises 490 residues: Betaine aldehyde dehydrogenase (490 aa).

Residues Ile27 and Asp93 each coordinate K(+). 150 to 152 contributes to the NAD(+) binding site; the sequence is GAW. Catalysis depends on Lys162, which acts as the Charge relay system. Residue 176–179 participates in NAD(+) binding; it reads KPSE. Residue Val180 participates in K(+) binding. Position 230-233 (230-233) interacts with NAD(+); it reads GTTT. Residue Leu246 participates in K(+) binding. Residue Glu252 is the Proton acceptor of the active site. Positions 254, 286, and 387 each coordinate NAD(+). Cys286 acts as the Nucleophile in catalysis. Cys286 carries the post-translational modification Cysteine sulfenic acid (-SOH). 2 residues coordinate K(+): Lys457 and Gly460. Glu464 functions as the Charge relay system in the catalytic mechanism.

The protein belongs to the aldehyde dehydrogenase family. As to quaternary structure, dimer of dimers. K(+) is required as a cofactor.

The catalysed reaction is betaine aldehyde + NAD(+) + H2O = glycine betaine + NADH + 2 H(+). The protein operates within amine and polyamine biosynthesis; betaine biosynthesis via choline pathway; betaine from betaine aldehyde: step 1/1. Functionally, involved in the biosynthesis of the osmoprotectant glycine betaine. Catalyzes the irreversible oxidation of betaine aldehyde to the corresponding acid. The protein is Betaine aldehyde dehydrogenase of Pseudomonas putida (strain W619).